The sequence spans 130 residues: Calcium-binding protein KRP1 (130 aa).

The region spanning 72–107 is the EF-hand domain; that stretch reads LTDEDVRCMIKEGDFDCDGALNQMEFCVLMFRLSPD. The Ca(2+) site is built by D85, D87, D89, and E96.

In terms of biological role, potential calcium sensor that binds calcium in vitro. The chain is Calcium-binding protein KRP1 from Arabidopsis thaliana (Mouse-ear cress).